The sequence spans 411 residues: Peptidyl-prolyl cis-trans isomerase (411 aa).

Serine 2 is modified (N-acetylserine). Disordered stretches follow at residues 54–127 and 160–302; these read IIKR…TLSP and NYVK…PKSK. Over residues 61 to 87 the composition is skewed to acidic residues; that stretch reads FEDDDFLGGDFDEDEIDEESSEEEEEE. A phosphoserine mark is found at serine 80 and serine 81. Threonine 89 is modified (phosphothreonine). Composition is skewed to acidic residues over residues 103 to 118 and 173 to 242; these read ESEDDEEDDDEDDEFQ and EGED…EEQK. Tyrosine 184 carries the phosphotyrosine; by CK2 modification. The residue at position 186 (serine 186) is a Phosphoserine; by CK2. Over residues 251 to 260 the composition is skewed to basic residues; it reads KSKKEKKRKH. The short motif at 256-271 is the Nuclear localization signal element; sequence KKRKHEEKEEEKKAKK. The segment covering 261–296 has biased composition (basic and acidic residues); that stretch reads EEKEEEKKAKKVKKVEFKKDLEEGPTKPKSKKEQDK. The 88-residue stretch at 324–411 folds into the PPIase FKBP-type domain; that stretch reads GARVGMRYIG…FDVKLVSMKN (88 aa).

Belongs to the FKBP-type PPIase family. FKBP3/4 subfamily. In terms of assembly, interacts with NOP53. In terms of processing, phosphorylated at tyrosine and dephosphorylated by the phosphotyrosine-specific phosphoprotein phosphatase PTP1.

The protein localises to the nucleus. The protein resides in the nucleolus. It carries out the reaction [protein]-peptidylproline (omega=180) = [protein]-peptidylproline (omega=0). Inhibited by both FK506 and rapamycin. In terms of biological role, proline isomerase that belongs to an abundant class of enzymes that catalyze the cis-trans isomerization of X-Pro peptide bonds and can accelerate the refolding of proline-containing polypeptides. Specifically binds nuclear localization sequences. May be involved in the assembly or folding of ribosomal proteins. The sequence is that of Peptidyl-prolyl cis-trans isomerase from Saccharomyces cerevisiae (strain ATCC 204508 / S288c) (Baker's yeast).